The following is a 1156-amino-acid chain: Nuclear pore complex protein Nup133 (1156 aa).

Met-1 carries the post-translational modification N-acetylmethionine. The segment at Met-1–Leu-39 is disordered. A phosphoserine mark is found at Ser-7 and Ser-15. Residue Arg-17 is modified to Omega-N-methylarginine. At Ser-27 the chain carries Phosphoserine. A Phosphothreonine modification is found at Thr-28. Residue Arg-30 is modified to Omega-N-methylarginine. Ser-41, Ser-45, Ser-50, Ser-72, Ser-131, Ser-480, Ser-489, Ser-493, Ser-501, and Ser-755 each carry phosphoserine. Position 787 is an N6-acetyllysine (Lys-787). A Phosphoserine modification is found at Ser-1133.

Belongs to the nucleoporin Nup133 family. In terms of assembly, forms part of the Nup160 subcomplex in the nuclear pore which is composed of NUP160, NUP133, NUP107 and Nup96. This complex plays a role in RNA export and in tethering Nup98 and NUP153 to the nucleus. As to expression, widely expressed in fetal and adult tissues. Expressed in the brain and kidney.

It localises to the nucleus. The protein localises to the nuclear pore complex. Its subcellular location is the chromosome. It is found in the centromere. The protein resides in the kinetochore. Functionally, involved in poly(A)+ RNA transport. Involved in nephrogenesis. The polypeptide is Nuclear pore complex protein Nup133 (NUP133) (Homo sapiens (Human)).